The following is a 333-amino-acid chain: Lipoyl synthase (333 aa).

The segment at 1 to 29 (MTDSAAGATEVATPATPSNKPYDATAKQK) is disordered. Residues C80, C85, C91, C106, C110, C113, and S320 each contribute to the [4Fe-4S] cluster site. Residues 91 to 309 (CFGKGTATFM…EEKAYEMGFT (219 aa)) form the Radical SAM core domain.

The protein belongs to the radical SAM superfamily. Lipoyl synthase family. [4Fe-4S] cluster serves as cofactor.

Its subcellular location is the cytoplasm. The catalysed reaction is [[Fe-S] cluster scaffold protein carrying a second [4Fe-4S](2+) cluster] + N(6)-octanoyl-L-lysyl-[protein] + 2 oxidized [2Fe-2S]-[ferredoxin] + 2 S-adenosyl-L-methionine + 4 H(+) = [[Fe-S] cluster scaffold protein] + N(6)-[(R)-dihydrolipoyl]-L-lysyl-[protein] + 4 Fe(3+) + 2 hydrogen sulfide + 2 5'-deoxyadenosine + 2 L-methionine + 2 reduced [2Fe-2S]-[ferredoxin]. Its pathway is protein modification; protein lipoylation via endogenous pathway; protein N(6)-(lipoyl)lysine from octanoyl-[acyl-carrier-protein]: step 2/2. Its function is as follows. Catalyzes the radical-mediated insertion of two sulfur atoms into the C-6 and C-8 positions of the octanoyl moiety bound to the lipoyl domains of lipoate-dependent enzymes, thereby converting the octanoylated domains into lipoylated derivatives. The polypeptide is Lipoyl synthase (Ralstonia pickettii (strain 12J)).